We begin with the raw amino-acid sequence, 251 residues long: Proteasome subunit alpha type-7 (251 aa).

Belongs to the peptidase T1A family. In terms of assembly, the 26S proteasome consists of a 20S proteasome core and two 19S regulatory subunits. The 20S proteasome core is composed of 28 subunits that are arranged in four stacked rings, resulting in a barrel-shaped structure. The two end rings are each formed by seven alpha subunits, and the two central rings are each formed by seven beta subunits. The catalytic chamber with the active sites is on the inside of the barrel.

The protein localises to the cytoplasm. It localises to the nucleus. In terms of biological role, the proteasome is a multicatalytic proteinase complex which is characterized by its ability to cleave peptides with Arg, Phe, Tyr, Leu, and Glu adjacent to the leaving group at neutral or slightly basic pH. The proteasome has an ATP-dependent proteolytic activity. This chain is Proteasome subunit alpha type-7 (psma7), found in Carassius auratus (Goldfish).